The following is a 136-amino-acid chain: Small ribosomal subunit protein uS11c (136 aa).

This sequence belongs to the universal ribosomal protein uS11 family. Part of the 30S ribosomal subunit.

The protein resides in the plastid. In Epifagus virginiana (Beechdrops), this protein is Small ribosomal subunit protein uS11c.